The sequence spans 354 residues: Fe(3+) ions import ATP-binding protein FbpC (354 aa).

Positions 4–236 (LELHAVHKSF…PRDAQTALFL (233 aa)) constitute an ABC transporter domain. ATP is bound at residue 36–43 (GPSGSGKT).

Belongs to the ABC transporter superfamily. Fe(3+) ion importer (TC 3.A.1.10) family. In terms of assembly, the complex is composed of two ATP-binding proteins (FbpC), two transmembrane proteins (FbpB) and a solute-binding protein (FbpA).

The protein localises to the cell inner membrane. The enzyme catalyses Fe(3+)(out) + ATP + H2O = Fe(3+)(in) + ADP + phosphate + H(+). In terms of biological role, part of the ABC transporter complex FbpABC involved in Fe(3+) ions import. Responsible for energy coupling to the transport system. In Pseudomonas fluorescens (strain ATCC BAA-477 / NRRL B-23932 / Pf-5), this protein is Fe(3+) ions import ATP-binding protein FbpC.